The chain runs to 789 residues: Larval serum protein 1 beta chain (789 aa).

Residues methionine 1–alanine 16 form the signal peptide.

The protein belongs to the hemocyanin family. In terms of assembly, heterohexamer, composed of three subunits, alpha, beta and gamma. As to expression, larval hemolymph.

It localises to the secreted. Its subcellular location is the extracellular space. Larval storage protein (LSP) which may serve as a store of amino acids for synthesis of adult proteins. The protein is Larval serum protein 1 beta chain (Lsp1beta) of Drosophila melanogaster (Fruit fly).